A 105-amino-acid polypeptide reads, in one-letter code: Iron-sulfur cluster assembly protein CyaY (105 aa).

It belongs to the frataxin family.

In terms of biological role, involved in iron-sulfur (Fe-S) cluster assembly. May act as a regulator of Fe-S biogenesis. This chain is Iron-sulfur cluster assembly protein CyaY, found in Paraburkholderia xenovorans (strain LB400).